Consider the following 361-residue polypeptide: Queuine tRNA-ribosyltransferase (361 aa).

Asp89 serves as the catalytic Proton acceptor. Substrate contacts are provided by residues 89 to 93 (DSGGF), Asp143, Gln185, and Gly212. Positions 243 to 249 (GVGTPED) are RNA binding. The active-site Nucleophile is the Asp262. The segment at 267-271 (TRNAR) is RNA binding; important for wobble base 34 recognition. Zn(2+)-binding residues include Cys300, Cys302, Cys305, and His331.

The protein belongs to the queuine tRNA-ribosyltransferase family. In terms of assembly, homodimer. Within each dimer, one monomer is responsible for RNA recognition and catalysis, while the other monomer binds to the replacement base PreQ1. The cofactor is Zn(2+).

The catalysed reaction is 7-aminomethyl-7-carbaguanine + guanosine(34) in tRNA = 7-aminomethyl-7-carbaguanosine(34) in tRNA + guanine. It functions in the pathway tRNA modification; tRNA-queuosine biosynthesis. In terms of biological role, catalyzes the base-exchange of a guanine (G) residue with the queuine precursor 7-aminomethyl-7-deazaguanine (PreQ1) at position 34 (anticodon wobble position) in tRNAs with GU(N) anticodons (tRNA-Asp, -Asn, -His and -Tyr). Catalysis occurs through a double-displacement mechanism. The nucleophile active site attacks the C1' of nucleotide 34 to detach the guanine base from the RNA, forming a covalent enzyme-RNA intermediate. The proton acceptor active site deprotonates the incoming PreQ1, allowing a nucleophilic attack on the C1' of the ribose to form the product. After dissociation, two additional enzymatic reactions on the tRNA convert PreQ1 to queuine (Q), resulting in the hypermodified nucleoside queuosine (7-(((4,5-cis-dihydroxy-2-cyclopenten-1-yl)amino)methyl)-7-deazaguanosine). The polypeptide is Queuine tRNA-ribosyltransferase (Nitrosomonas eutropha (strain DSM 101675 / C91 / Nm57)).